The primary structure comprises 212 residues: MAEEQKIALESESPAKVTTPAPADTPAPAPAEIPAPAPAPTPADVTKDVAEEKIQNPPPEQIFDDSKALTVVEKPVEEPAPAKPASASLDRDVKLADLSKEKRLSFVRAWEESEKSKAENKAEKKIADVHAWENSKKAAVEAQLKKIEEQLEKKKAEYAERMKNKVAAIHKEAEERRAMIEAKRGEDVLKAEETAAKYRATGIVPKATCGCF.

Residues 1–88 (MAEEQKIALE…PAPAKPASAS (88 aa)) form a disordered region. Position 13 is a phosphoserine (Ser13). A compositionally biased stretch (pro residues) spans 23–41 (ADTPAPAPAEIPAPAPAPT). Over residues 45–54 (VTKDVAEEKI) the composition is skewed to basic and acidic residues.

Belongs to the remorin family.

It is found in the cell membrane. This is an uncharacterized protein from Arabidopsis thaliana (Mouse-ear cress).